Here is a 187-residue protein sequence, read N- to C-terminus: MAYSMSDLKKGLKVEIEGVPYKIVEYQHVKPGKGAAFVRVKMKSFFDGRVLEKTFHAGDKCEEPNLQEKNMQYLYHDGDHFQFMDVESYEQIALSDEQVGDVAKWMTDGMTVSILFHNNKAISVDVPQVVELKITETPPNFKGDTSSGSKKPATLETGAVIQIPYHVLEGDVVRVNTELGEYIEKVK.

Belongs to the elongation factor P family.

The protein resides in the cytoplasm. The protein operates within protein biosynthesis; polypeptide chain elongation. Its function is as follows. Involved in peptide bond synthesis. Stimulates efficient translation and peptide-bond synthesis on native or reconstituted 70S ribosomes in vitro. Probably functions indirectly by altering the affinity of the ribosome for aminoacyl-tRNA, thus increasing their reactivity as acceptors for peptidyl transferase. This chain is Elongation factor P, found in Wolinella succinogenes (strain ATCC 29543 / DSM 1740 / CCUG 13145 / JCM 31913 / LMG 7466 / NCTC 11488 / FDC 602W) (Vibrio succinogenes).